The primary structure comprises 91 residues: Large ribosomal subunit protein bL27 (91 aa).

This sequence belongs to the bacterial ribosomal protein bL27 family.

The sequence is that of Large ribosomal subunit protein bL27 from Deinococcus deserti (strain DSM 17065 / CIP 109153 / LMG 22923 / VCD115).